Consider the following 160-residue polypeptide: Small ribosomal subunit protein uS19 (160 aa).

Positions 1–27 are disordered; the sequence is MARQKFSGKGGKGKSKKGQQSTAPRRR.

It belongs to the universal ribosomal protein uS19 family.

Its function is as follows. Protein S19 forms a complex with S13 that binds strongly to the 16S ribosomal RNA. This is Small ribosomal subunit protein uS19 from Methanococcus vannielii (strain ATCC 35089 / DSM 1224 / JCM 13029 / OCM 148 / SB).